The sequence spans 178 residues: Ribosome maturation factor RimP (178 aa).

The protein belongs to the RimP family.

The protein resides in the cytoplasm. Required for maturation of 30S ribosomal subunits. This chain is Ribosome maturation factor RimP, found in Maricaulis maris (strain MCS10) (Caulobacter maris).